We begin with the raw amino-acid sequence, 132 residues long: MSKILNTIWQYVRAFVLIYACLYAGIFIASLLPVTIPGSIIGMLILFVLLALQILPAQWVNPGCYLLIRYMALLFVPIGVGVMQYFDLLRAQFGPVVVSCAISTLVVFLVVSWSSQLVHGERKVVGQKGSKE.

4 consecutive transmembrane segments (helical) span residues 8 to 28 (IWQY…GIFI), 31 to 51 (LLPV…VLLA), 63 to 83 (GCYL…VGVM), and 93 to 113 (FGPV…VVSW).

The protein belongs to the UPF0299 family.

It is found in the cell inner membrane. The polypeptide is UPF0299 membrane protein YohJ (Escherichia fergusonii (strain ATCC 35469 / DSM 13698 / CCUG 18766 / IAM 14443 / JCM 21226 / LMG 7866 / NBRC 102419 / NCTC 12128 / CDC 0568-73)).